We begin with the raw amino-acid sequence, 447 residues long: UDP-N-acetylglucosamine 1-carboxyvinyltransferase (447 aa).

A phosphoenolpyruvate-binding site is contributed by 27–28 (KN). Residue Arg-97 participates in UDP-N-acetyl-alpha-D-glucosamine binding. Cys-121 serves as the catalytic Proton donor. Residue Cys-121 is modified to 2-(S-cysteinyl)pyruvic acid O-phosphothioketal. Residues 126 to 130 (RPVDL), Asp-314, and Val-336 each bind UDP-N-acetyl-alpha-D-glucosamine.

The protein belongs to the EPSP synthase family. MurA subfamily.

The protein resides in the cytoplasm. It carries out the reaction phosphoenolpyruvate + UDP-N-acetyl-alpha-D-glucosamine = UDP-N-acetyl-3-O-(1-carboxyvinyl)-alpha-D-glucosamine + phosphate. Its pathway is cell wall biogenesis; peptidoglycan biosynthesis. Its function is as follows. Cell wall formation. Adds enolpyruvyl to UDP-N-acetylglucosamine. The polypeptide is UDP-N-acetylglucosamine 1-carboxyvinyltransferase (Trichormus variabilis (strain ATCC 29413 / PCC 7937) (Anabaena variabilis)).